Here is a 435-residue protein sequence, read N- to C-terminus: Enolase (435 aa).

Substrate-binding residues include histidine 155 and glutamate 164. Residue glutamate 205 is the Proton donor of the active site. 3 residues coordinate Mg(2+): aspartate 243, glutamate 292, and aspartate 319. Substrate contacts are provided by residues glutamate 292, aspartate 319, lysine 344, 371–374 (SHRS), and lysine 395. Lysine 344 acts as the Proton acceptor in catalysis.

Belongs to the enolase family. Homooctamer. Mg(2+) serves as cofactor.

The protein localises to the cytoplasm. It localises to the secreted. The protein resides in the cell surface. The enzyme catalyses (2R)-2-phosphoglycerate = phosphoenolpyruvate + H2O. The protein operates within carbohydrate degradation; glycolysis; pyruvate from D-glyceraldehyde 3-phosphate: step 4/5. Functionally, catalyzes the reversible conversion of 2-phosphoglycerate (2-PG) into phosphoenolpyruvate (PEP). It is essential for the degradation of carbohydrates via glycolysis. 'Moonlights' as a plasminogen receptor and plasmin activator. Binds host (human) plasminogen in vitro; enhances the activity of host tissue-specific plasminogen activator (tPA). The protein is Enolase of Streptococcus pyogenes serotype M1.